A 577-amino-acid chain; its full sequence is Acyl-coenzyme A synthetase ACSM1, mitochondrial (577 aa).

Residues 1 to 31 constitute a mitochondrion transit peptide; sequence MQWLMRFRTLWGIHKSFHNIHPAPSQLRCRS. Position 85 is an N6-succinyllysine (K85). An N6-acetyllysine; alternate modification is found at K146. The residue at position 146 (K146) is an N6-succinyllysine; alternate. Position 183 is an N6-succinyllysine (K183). An N6-acetyllysine; alternate modification is found at K204. An N6-succinyllysine; alternate modification is found at K204. An N6-acetyllysine modification is found at K214. Residue 226 to 234 coordinates ATP; that stretch reads TSGTTGFPK. An N6-succinyllysine modification is found at K237. N6-acetyllysine; alternate occurs at positions 356 and 391. An N6-succinyllysine; alternate mark is found at K356 and K391. ATP-binding residues include D452 and R467. N6-acetyllysine is present on K531. Residue K538 is modified to N6-acetyllysine; alternate. The residue at position 538 (K538) is an N6-succinyllysine; alternate. K549 carries the post-translational modification N6-acetyllysine. Residue K563 coordinates ATP.

This sequence belongs to the ATP-dependent AMP-binding enzyme family. As to quaternary structure, monomer. Requires Mg(2+) as cofactor. The cofactor is Mn(2+).

The protein localises to the mitochondrion matrix. It localises to the mitochondrion. The enzyme catalyses a medium-chain fatty acid + ATP + CoA = a medium-chain fatty acyl-CoA + AMP + diphosphate. The catalysed reaction is benzoate + ATP + CoA = benzoyl-CoA + AMP + diphosphate. It carries out the reaction (R)-lipoate + GTP + H(+) = (R)-lipoyl-GMP + diphosphate. It catalyses the reaction octanoate + ATP + CoA = octanoyl-CoA + AMP + diphosphate. The enzyme catalyses decanoate + ATP + CoA = decanoyl-CoA + AMP + diphosphate. The catalysed reaction is dodecanoate + ATP + CoA = dodecanoyl-CoA + AMP + diphosphate. It carries out the reaction tetradecanoate + ATP + CoA = tetradecanoyl-CoA + AMP + diphosphate. It catalyses the reaction hexanoate + ATP + CoA = hexanoyl-CoA + AMP + diphosphate. The enzyme catalyses butanoate + ATP + CoA = butanoyl-CoA + AMP + diphosphate. The catalysed reaction is hexadecanoate + ATP + CoA = hexadecanoyl-CoA + AMP + diphosphate. With respect to regulation, activated by monovalent cations, such as potassium, rubidium or ammonium. Functionally, catalyzes the activation of fatty acids by CoA to produce an acyl-CoA, the first step in fatty acid metabolism. Capable of activating medium-chain fatty acids (e.g. butyric (C4) to decanoic (C10) acids), and certain carboxylate-containing xenobiotics, e.g. benzoate. Also catalyzes the activation of lipoate to lipoyl-nucleoside monophosphate. Activates lipoate with GTP at a 1000-fold higher rate than with ATP and activates both (R)- and (S)-lipoate to the respective lipoyl-GMP, with a preference for (R)-lipoate. This is Acyl-coenzyme A synthetase ACSM1, mitochondrial (ACSM1) from Homo sapiens (Human).